Here is a 421-residue protein sequence, read N- to C-terminus: Probable UDP-arabinose 4-epimerase 1 (421 aa).

Over 1–33 (MLPTNRNRPQQRPARSWYFISDMDFSDPKRKPR) the chain is Cytoplasmic. Residues 34-53 (YLSKILMVALLTAMCVVMLT) form a helical; Signal-anchor for type II membrane protein membrane-spanning segment. The Lumenal segment spans residues 54 to 421 (QPPCHRRTPS…GYGPPQAMVL (368 aa)). An NAD(+)-binding site is contributed by 74–105 (HVLVTGGAGYIGSHAALRLLKDSFRVTIVDNL). Tyr222 acts as the Proton acceptor in catalysis.

It belongs to the NAD(P)-dependent epimerase/dehydratase family. Requires NAD(+) as cofactor.

It localises to the golgi apparatus. The protein resides in the golgi stack membrane. The enzyme catalyses UDP-beta-L-arabinopyranose = UDP-alpha-D-xylose. Its pathway is nucleotide-sugar biosynthesis; UDP-L-arabinose biosynthesis; UDP-L-arabinose from UDP-alpha-D-xylose: step 1/1. The protein operates within cell wall biogenesis; cell wall polysaccharide biosynthesis. This Oryza sativa subsp. japonica (Rice) protein is Probable UDP-arabinose 4-epimerase 1 (UEL-1).